The sequence spans 623 residues: tRNA uridine 5-carboxymethylaminomethyl modification enzyme MnmG (623 aa).

G12–G17 is an FAD binding site. Residue G272–F286 participates in NAD(+) binding.

This sequence belongs to the MnmG family. As to quaternary structure, homodimer. Heterotetramer of two MnmE and two MnmG subunits. FAD serves as cofactor.

The protein localises to the cytoplasm. Functionally, NAD-binding protein involved in the addition of a carboxymethylaminomethyl (cmnm) group at the wobble position (U34) of certain tRNAs, forming tRNA-cmnm(5)s(2)U34. This Christiangramia forsetii (strain DSM 17595 / CGMCC 1.15422 / KT0803) (Gramella forsetii) protein is tRNA uridine 5-carboxymethylaminomethyl modification enzyme MnmG.